Consider the following 1040-residue polypeptide: Multidrug resistance protein MdtB (1040 aa).

A run of 12 helical transmembrane segments spans residues 25 to 45 (LLMA…PVAA), 347 to 367 (LMLA…NIPA), 369 to 389 (IIPG…MVFL), 396 to 416 (LTLM…IVVI), 440 to 460 (IGFT…PLLF), 472 to 492 (FAVT…TLTP), 537 to 557 (WLTL…WIVI), 869 to 889 (LIVA…ESFI), 890 to 910 (HPIT…LALM), 911 to 931 (IAGS…IGIV), 968 to 988 (ILMT…STGV), and 998 to 1018 (IAMV…TPVI).

The protein belongs to the resistance-nodulation-cell division (RND) (TC 2.A.6) family. MdtB subfamily. As to quaternary structure, part of a tripartite efflux system composed of MdtA, MdtB and MdtC. MdtB forms a heteromultimer with MdtC.

It is found in the cell inner membrane. The sequence is that of Multidrug resistance protein MdtB from Salmonella arizonae (strain ATCC BAA-731 / CDC346-86 / RSK2980).